We begin with the raw amino-acid sequence, 361 residues long: Peptide chain release factor 1 (361 aa).

Gln237 bears the N5-methylglutamine mark. Residues 287-297 (KQQKEQSDTRK) are compositionally biased toward basic and acidic residues. A disordered region spans residues 287–313 (KQQKEQSDTRKSLVGSGDRSERIRTYN).

This sequence belongs to the prokaryotic/mitochondrial release factor family. Methylated by PrmC. Methylation increases the termination efficiency of RF1.

Its subcellular location is the cytoplasm. Peptide chain release factor 1 directs the termination of translation in response to the peptide chain termination codons UAG and UAA. The protein is Peptide chain release factor 1 of Francisella tularensis subsp. holarctica (strain FTNF002-00 / FTA).